Reading from the N-terminus, the 428-residue chain is Tryptophan synthase beta chain (428 aa).

Lys-100 carries the N6-(pyridoxal phosphate)lysine modification.

This sequence belongs to the TrpB family. In terms of assembly, tetramer of two alpha and two beta chains. It depends on pyridoxal 5'-phosphate as a cofactor.

It carries out the reaction (1S,2R)-1-C-(indol-3-yl)glycerol 3-phosphate + L-serine = D-glyceraldehyde 3-phosphate + L-tryptophan + H2O. It participates in amino-acid biosynthesis; L-tryptophan biosynthesis; L-tryptophan from chorismate: step 5/5. Its function is as follows. The beta subunit is responsible for the synthesis of L-tryptophan from indole and L-serine. This chain is Tryptophan synthase beta chain, found in Streptomyces griseus subsp. griseus (strain JCM 4626 / CBS 651.72 / NBRC 13350 / KCC S-0626 / ISP 5235).